A 687-amino-acid polypeptide reads, in one-letter code: T-box transcription factor TBX2b (687 aa).

The segment at residues 103–276 (LWDQFHKLGT…NNPFAKGFRD (174 aa)) is a DNA-binding region (T-box). Disordered stretches follow at residues 303–452 (DRDG…ESPS) and 611–687 (NLLT…DSPK). Composition is skewed to basic and acidic residues over residues 338 to 357 (GSRD…HQND), 375 to 400 (SRSE…RKTS), and 408 to 430 (NLEK…KDTE). Polar residues-rich tracts occupy residues 431–451 (NSGI…TESP), 611–630 (NLLT…SSKC), and 644–654 (GASQRNGSPKT). Residues 654 to 681 (TTMKESINELQNIQRLVSGLESQRETSS) adopt a coiled-coil conformation. Over residues 675 to 687 (SQRETSSPRDSPK) the composition is skewed to basic and acidic residues.

In terms of assembly, binds DNA as a monomer. Expressed in the axial mesoderm, notably, in the notochordal precursor cells immediately before formation of the notochord and in the chordoneural hinge of the tail bud, after the notochord is formed. In addition, its expression is detected in the ventral forebrain, sensory neurons, fin buds and excretory system.

It localises to the nucleus. Its function is as follows. Transcription factor which acts as a transcriptional repressor. May also function as a transcriptional activator. Binds to the palindromic T site 5'-TTCACACCTAGGTGTGAA-3' DNA sequence, or a half-site, which are present in the regulatory region of several genes. Involved in the transcriptional regulation of genes required for mesoderm differentiation. Plays a role in the specification of late notochordal precursor cells and formation of the differentiated notochord. Required for cardiac atrioventricular canal formation. The chain is T-box transcription factor TBX2b (tbx2b) from Danio rerio (Zebrafish).